A 68-amino-acid polypeptide reads, in one-letter code: Probable tautomerase jhp_0858 (68 aa).

The active-site Proton acceptor; via imino nitrogen is Pro-2.

It belongs to the 4-oxalocrotonate tautomerase family.

The polypeptide is Probable tautomerase jhp_0858 (Helicobacter pylori (strain J99 / ATCC 700824) (Campylobacter pylori J99)).